Reading from the N-terminus, the 376-residue chain is Thymidine kinase (376 aa).

The segment at 1–44 (MASYPGHQHASAFDQAARSRGHSNRRTALRPRRQQEATEVRPEQ) is disordered. The segment covering 19–32 (SRGHSNRRTALRPR) has biased composition (basic residues). Over residues 33 to 44 (RQQEATEVRPEQ) the composition is skewed to basic and acidic residues. Position 56–63 (56–63 (GPHGMGKT)) interacts with ATP. Catalysis depends on glutamate 83, which acts as the Proton acceptor. Residues tyrosine 101 and glutamine 125 each coordinate substrate. Arginine 216 contacts ATP. Arginine 222 contacts substrate. A disordered region spans residues 260 to 280 (GQLSGTAVPPQGAEPQSNAGP).

It belongs to the herpesviridae thymidine kinase family. Homodimer.

The enzyme catalyses thymidine + ATP = dTMP + ADP + H(+). Functionally, catalyzes the transfer of the gamma-phospho group of ATP to thymidine to generate dTMP in the salvage pathway of pyrimidine synthesis. The dTMP serves as a substrate for DNA polymerase during viral DNA replication. Allows the virus to be reactivated and to grow in non-proliferative cells lacking a high concentration of phosphorylated nucleic acid precursors. The sequence is that of Thymidine kinase from Human herpesvirus 1 (strain SC16) (HHV-1).